The following is a 527-amino-acid chain: Berberine bridge enzyme-like 10 (527 aa).

The N-terminal stretch at 1 to 20 (MEKLLVISLLLLISTSVTTS) is a signal peptide. An intrachain disulfide couples cysteine 32 to cysteine 95. N-linked (GlcNAc...) asparagine glycosylation occurs at asparagine 53. The FAD-binding PCMH-type domain occupies 73-248 (TTPKPISVVA…LGYKIQLVPV (176 aa)). Histidine 110 is modified (pros-8alpha-FAD histidine). N-linked (GlcNAc...) asparagine glycosylation is found at asparagine 137 and asparagine 293.

This sequence belongs to the oxygen-dependent FAD-linked oxidoreductase family. It depends on FAD as a cofactor.

It is found in the secreted. It localises to the cell wall. This Arabidopsis thaliana (Mouse-ear cress) protein is Berberine bridge enzyme-like 10.